The primary structure comprises 153 residues: Protein SprT-like (153 aa).

The region spanning 7-145 is the SprT-like domain; the sequence is QTLVEKISIV…VCGKCHGRLS (139 aa). Residue H67 participates in Zn(2+) binding. E68 is an active-site residue. A Zn(2+)-binding site is contributed by H71.

This sequence belongs to the SprT family. Zn(2+) serves as cofactor.

It is found in the cytoplasm. This Enterococcus faecalis (strain ATCC 700802 / V583) protein is Protein SprT-like.